Here is a 218-residue protein sequence, read N- to C-terminus: Glycoprotein UL1 (218 aa).

A signal peptide spans 1-27 (MGVQCNSKLLLLAVLITIILSSILVQA). Residues 178–198 (VATHVGWTATVVIIICVLTYV) traverse the membrane as a helical segment.

It belongs to the RL11 family.

It localises to the virion membrane. The protein is Glycoprotein UL1 (UL1) of Homo sapiens (Human).